The primary structure comprises 470 residues: Glutathione reductase (470 aa).

The FAD site is built by Ser-16 and Gly-17. Ser-16 contacts glutathione. Residue Arg-23 participates in glutathione binding. The FAD site is built by Glu-36, Thr-43, Cys-44, and Lys-52. A disulfide bond links Cys-44 and Cys-49. Position 104 (Tyr-104) interacts with glutathione. Ala-120 provides a ligand contact to FAD. NADP(+) is bound by residues Gly-190, Ile-193, Glu-196, Arg-213, and Arg-219. Thr-228 provides a ligand contact to glutathione. Gly-280 lines the NADP(+) pocket. Residue Asp-321 participates in FAD binding. Glu-327 is a binding site for NADP(+). Thr-329 contributes to the FAD binding site. Position 337 (Arg-337) interacts with glutathione. Residue Ala-362 coordinates NADP(+). Residue Lys-412 participates in glutathione binding. His-459 serves as a coordination point for FAD. His-459 serves as the catalytic Proton acceptor.

The protein belongs to the class-I pyridine nucleotide-disulfide oxidoreductase family. Homodimer. The cofactor is FAD.

It is found in the cytoplasm. The protein resides in the mitochondrion. It carries out the reaction 2 glutathione + NADP(+) = glutathione disulfide + NADPH + H(+). Catalyzes the reduction of glutathione disulfide (GSSG) to reduced glutathione (GSH). Constitutes the major mechanism to maintain a high GSH:GSSG ratio in the cytosol. The protein is Glutathione reductase (GLR1) of Yarrowia lipolytica (strain CLIB 122 / E 150) (Yeast).